The sequence spans 135 residues: C-type lectin LmsL (135 aa).

4 disulfides stabilise this stretch: C3–C14, C31–C131, C38–C133, and C106–C123. The C-type lectin domain maps to 10–132 (MNGLCYKIFD…CESKNAFLCQ (123 aa)). Ca(2+) contacts are provided by Q96, D98, E104, N119, and D120. Residues 96–98 (QPD) carry the Galactose-binding motif.

It belongs to the true venom lectin family. Homodimer; disulfide-linked. In terms of tissue distribution, expressed by the venom gland.

It localises to the secreted. Functionally, galactose-binding protein which recognizes specific carbohydrate structures and agglutinates a variety of animal cells by binding to cell-surface glycoproteins and glycolipids. Is a calcium-dependent lectin. Shows high hemagglutinating activity, that is inhibited by lactose, galactose and inositol. The sequence is that of C-type lectin LmsL from Lachesis stenophrys (Central American bushmaster).